An 860-amino-acid chain; its full sequence is Leucine--tRNA ligase (860 aa).

The short motif at 42–52 (PYPSGRLHMGH) is the 'HIGH' region element. Positions 619 to 623 (KMSKS) match the 'KMSKS' region motif. K622 is an ATP binding site.

The protein belongs to the class-I aminoacyl-tRNA synthetase family.

The protein resides in the cytoplasm. The enzyme catalyses tRNA(Leu) + L-leucine + ATP = L-leucyl-tRNA(Leu) + AMP + diphosphate. This chain is Leucine--tRNA ligase, found in Escherichia coli O127:H6 (strain E2348/69 / EPEC).